The following is a 501-amino-acid chain: Ribonuclease Y (501 aa).

The helical transmembrane segment at 7-27 (LVVIALLGALTLLTAGHVLAL) threads the bilayer. Residues 190–256 (VVRAVPLPEE…RLTLEKLVAD (67 aa)) enclose the KH domain. One can recognise an HD domain in the interval 316–409 (VLAHLVESAH…TQAADAISGG (94 aa)).

It belongs to the RNase Y family.

The protein resides in the cell membrane. Functionally, endoribonuclease that initiates mRNA decay. This Thermobifida fusca (strain YX) protein is Ribonuclease Y.